The following is a 594-amino-acid chain: Probable translation initiation factor IF-2 (594 aa).

The tr-type G domain maps to 5–224 (YRAPIVVVVG…LMAGLTQRLV (220 aa)). The segment at 14–21 (GHVDVGKT) is G1. GTP is bound at residue 14–21 (GHVDVGKT). The interval 39–43 (MITQH) is G2. The interval 80–83 (DTPG) is G3. GTP-binding positions include 80 to 84 (DTPGH) and 134 to 137 (NKVD). Positions 134 to 137 (NKVD) are G4. The G5 stretch occupies residues 202–204 (SAV).

Belongs to the TRAFAC class translation factor GTPase superfamily. Classic translation factor GTPase family. IF-2 subfamily.

Its function is as follows. Function in general translation initiation by promoting the binding of the formylmethionine-tRNA to ribosomes. Seems to function along with eIF-2. This Caldivirga maquilingensis (strain ATCC 700844 / DSM 13496 / JCM 10307 / IC-167) protein is Probable translation initiation factor IF-2.